The following is a 275-amino-acid chain: NH(3)-dependent NAD(+) synthetase (275 aa).

Position 47–54 (47–54) interacts with ATP; the sequence is GISGGQDS. Asp53 is a binding site for Mg(2+). Arg141 is a binding site for deamido-NAD(+). Position 161 (Thr161) interacts with ATP. Glu166 contacts Mg(2+). The deamido-NAD(+) site is built by Lys174 and Asp181. ATP-binding residues include Lys190 and Thr212. A deamido-NAD(+)-binding site is contributed by 261 to 262; sequence HK.

The protein belongs to the NAD synthetase family. In terms of assembly, homodimer.

The catalysed reaction is deamido-NAD(+) + NH4(+) + ATP = AMP + diphosphate + NAD(+) + H(+). The protein operates within cofactor biosynthesis; NAD(+) biosynthesis; NAD(+) from deamido-NAD(+) (ammonia route): step 1/1. Catalyzes the ATP-dependent amidation of deamido-NAD to form NAD. Uses ammonia as a nitrogen source. This chain is NH(3)-dependent NAD(+) synthetase, found in Latilactobacillus sakei subsp. sakei (strain 23K) (Lactobacillus sakei subsp. sakei).